A 451-amino-acid chain; its full sequence is Methylenetetrahydrofolate--tRNA-(uracil-5-)-methyltransferase TrmFO (451 aa).

18–23 (GGGLAG) provides a ligand contact to FAD.

This sequence belongs to the MnmG family. TrmFO subfamily. Requires FAD as cofactor.

Its subcellular location is the cytoplasm. The catalysed reaction is uridine(54) in tRNA + (6R)-5,10-methylene-5,6,7,8-tetrahydrofolate + NADH + H(+) = 5-methyluridine(54) in tRNA + (6S)-5,6,7,8-tetrahydrofolate + NAD(+). It catalyses the reaction uridine(54) in tRNA + (6R)-5,10-methylene-5,6,7,8-tetrahydrofolate + NADPH + H(+) = 5-methyluridine(54) in tRNA + (6S)-5,6,7,8-tetrahydrofolate + NADP(+). Functionally, catalyzes the folate-dependent formation of 5-methyl-uridine at position 54 (M-5-U54) in all tRNAs. This chain is Methylenetetrahydrofolate--tRNA-(uracil-5-)-methyltransferase TrmFO, found in Synechococcus sp. (strain JA-3-3Ab) (Cyanobacteria bacterium Yellowstone A-Prime).